The primary structure comprises 279 residues: Threonylcarbamoyl-AMP synthase (279 aa).

A mitochondrion-targeting transit peptide spans 1 to 55; sequence MSPARRCRGMRAAVAASVGLSEGPAGSRSGRLFRPPSPAPAAPGARLLRLPGSGA. The interval 21–41 is disordered; it reads SEGPAGSRSGRLFRPPSPAPA. S60 carries the phosphoserine modification. The region spanning 67 to 257 is the YrdC-like domain; that stretch reads TEALRAAVAE…KFGIIRPGCA (191 aa).

Belongs to the SUA5 family. Interacts with RSC1A1. As to expression, ubiquitously expressed.

It is found in the cytoplasm. Its subcellular location is the mitochondrion. The protein resides in the cell membrane. It catalyses the reaction L-threonine + hydrogencarbonate + ATP = L-threonylcarbamoyladenylate + diphosphate + H2O. Functionally, cytoplasmic and mitochondrial threonylcarbamoyl-AMP synthase required for the formation of a threonylcarbamoyl group on adenosine at position 37 (t(6)A37) in tRNAs that read codons beginning with adenine. Catalyzes the conversion of L-threonine, HCO(3)(-)/CO(2) and ATP to give threonylcarbamoyl-AMP (TC-AMP) as the acyladenylate intermediate, with the release of diphosphate. Participates in t(6)A37 formation in cytoplasmic and mitochondrial tRNAs. May regulate the activity of some transporters. This Homo sapiens (Human) protein is Threonylcarbamoyl-AMP synthase.